The chain runs to 660 residues: DNA mismatch repair protein MutL (660 aa).

It belongs to the DNA mismatch repair MutL/HexB family.

In terms of biological role, this protein is involved in the repair of mismatches in DNA. It is required for dam-dependent methyl-directed DNA mismatch repair. May act as a 'molecular matchmaker', a protein that promotes the formation of a stable complex between two or more DNA-binding proteins in an ATP-dependent manner without itself being part of a final effector complex. This Streptococcus pyogenes serotype M1 protein is DNA mismatch repair protein MutL.